The primary structure comprises 481 residues: UDP-N-acetylmuramate--L-alanine ligase (481 aa).

Position 115-121 (115-121 (GTHGKTT)) interacts with ATP.

Belongs to the MurCDEF family.

It localises to the cytoplasm. It catalyses the reaction UDP-N-acetyl-alpha-D-muramate + L-alanine + ATP = UDP-N-acetyl-alpha-D-muramoyl-L-alanine + ADP + phosphate + H(+). The protein operates within cell wall biogenesis; peptidoglycan biosynthesis. In terms of biological role, cell wall formation. The protein is UDP-N-acetylmuramate--L-alanine ligase of Granulibacter bethesdensis (strain ATCC BAA-1260 / CGDNIH1).